The primary structure comprises 304 residues: GTP cyclohydrolase FolE2 (304 aa).

The protein belongs to the GTP cyclohydrolase IV family.

The enzyme catalyses GTP + H2O = 7,8-dihydroneopterin 3'-triphosphate + formate + H(+). It functions in the pathway cofactor biosynthesis; 7,8-dihydroneopterin triphosphate biosynthesis; 7,8-dihydroneopterin triphosphate from GTP: step 1/1. Converts GTP to 7,8-dihydroneopterin triphosphate. The polypeptide is GTP cyclohydrolase FolE2 (Hahella chejuensis (strain KCTC 2396)).